Consider the following 330-residue polypeptide: Small ribosomal subunit protein uS2 (330 aa).

This sequence belongs to the universal ribosomal protein uS2 family.

This chain is Small ribosomal subunit protein uS2, found in Rhodopseudomonas palustris (strain BisA53).